We begin with the raw amino-acid sequence, 592 residues long: Bifunctional purine biosynthesis protein ATIC (592 aa).

Methionine 1 is modified (N-acetylmethionine). One can recognise an MGS-like domain in the interval 1–146; sequence MAPGHLALFS…KNHARVTVVC (146 aa). The segment at 1–198 is IMP cyclohydrolase; the sequence is MAPGHLALFS…ISDYFRKQYS (198 aa). Residues 12–14, 34–37, 64–67, 101–102, and 125–126 each bind IMP; these read SDK, SGGT, RVKT, CN, and DI. The active-site Proton donor/acceptor; for FAICAR cyclization activity is lysine 137. An N6-acetyllysine modification is found at lysine 199. The interval 199–592 is AICAR formyltransferase; the sequence is KGISQMPLRY…AHTNLRLFHH (394 aa). Residues 207-208, histidine 267, glycine 316, aspartate 339, asparagine 431, and arginine 451 contribute to the 5-amino-1-(5-phospho-beta-D-ribosyl)imidazole-4-carboxamide site; that span reads RY. Histidine 267 (proton acceptor; for AICAR formyltransferase activity) is an active-site residue. A (6R)-10-formyltetrahydrofolate-binding site is contributed by isoleucine 452. A 5-amino-1-(5-phospho-beta-D-ribosyl)imidazole-4-carboxamide-binding site is contributed by phenylalanine 541. (6R)-10-formyltetrahydrofolate contacts are provided by residues aspartate 546 and 565–566; that span reads SA. Arginine 588 contributes to the 5-amino-1-(5-phospho-beta-D-ribosyl)imidazole-4-carboxamide binding site.

It belongs to the PurH family. As to quaternary structure, homodimer. Associates with internalized INSR complexes on Golgi/endosomal membranes. Interacts with INSR; ATIC together with PRKAA2/AMPK2 and HACD3/PTPLAD1 is proposed to be part of a signaling network regulating INSR autophosphorylation and endocytosis.

The protein localises to the cytoplasm. The protein resides in the cytosol. It catalyses the reaction (6R)-10-formyltetrahydrofolate + 5-amino-1-(5-phospho-beta-D-ribosyl)imidazole-4-carboxamide = 5-formamido-1-(5-phospho-D-ribosyl)imidazole-4-carboxamide + (6S)-5,6,7,8-tetrahydrofolate. The catalysed reaction is 10-formyldihydrofolate + 5-amino-1-(5-phospho-beta-D-ribosyl)imidazole-4-carboxamide = 5-formamido-1-(5-phospho-D-ribosyl)imidazole-4-carboxamide + 7,8-dihydrofolate. The enzyme catalyses IMP + H2O = 5-formamido-1-(5-phospho-D-ribosyl)imidazole-4-carboxamide. It participates in purine metabolism; IMP biosynthesis via de novo pathway; 5-formamido-1-(5-phospho-D-ribosyl)imidazole-4-carboxamide from 5-amino-1-(5-phospho-D-ribosyl)imidazole-4-carboxamide (10-formyl THF route): step 1/1. Its pathway is purine metabolism; IMP biosynthesis via de novo pathway; IMP from 5-formamido-1-(5-phospho-D-ribosyl)imidazole-4-carboxamide: step 1/1. AMP and XMP inhibit AICAR formyltransferase activity. In terms of biological role, bifunctional enzyme that catalyzes the last two steps of purine biosynthesis. Acts as a transformylase that incorporates a formyl group to the AMP analog AICAR (5-amino-1-(5-phospho-beta-D-ribosyl)imidazole-4-carboxamide) to produce the intermediate formyl-AICAR (FAICAR). Can use both 10-formyldihydrofolate and 10-formyltetrahydrofolate as the formyl donor in this reaction. Also catalyzes the cyclization of FAICAR to inosine monophosphate (IMP). Promotes insulin receptor/INSR autophosphorylation and is involved in INSR internalization. This is Bifunctional purine biosynthesis protein ATIC (ATIC) from Pongo abelii (Sumatran orangutan).